Consider the following 346-residue polypeptide: Dehydrogenase orf1 (346 aa).

43-48 serves as a coordination point for NADP(+); sequence VDYATQ. A substrate-binding site is contributed by 133 to 140; sequence LAFSTAIV. Residues 170–173, 193–196, Y211, and 251–252 contribute to the NADP(+) site; these read ATSV, SPHN, and LN. 269–273 provides a ligand contact to substrate; that stretch reads APPNV. 336–337 is an NADP(+) binding site; sequence VS.

Belongs to the zinc-containing alcohol dehydrogenase family.

The protein operates within secondary metabolite biosynthesis. Its function is as follows. Dehydrogenase; part of the gene cluster that mediates the biosynthesis of nigerpyrone and its derivatives carbonarone A and pestalamide A. The biosynthesis pathway begins with the polyketide assembly by epaA to form phenylacetyl triketide precursor from successive condensation of two malonyl-CoA, presumably with one phenylacetyl-CoA starter unit produced by the phenylacetyl-CoA ligase epaB. For the nigerpyrone biosynthesis, the reactive polyketide chain is released as an aldehyde through the R-domain. A nonenzymatic cyclization and dehydration may create nigerpyrone. For the biosynthesis of carbonarone A and pestalamide A, an extra methyl group is added through the C-methyltransferase domain. Several further steps involving the dehydrogenase orf1, the cytochrome P450 monooxygenase orf2 and the FAD-dependent monooxygenase orf3 are required to form a carbonarone A precursor which is converted to carbonarone A via cyclization. The O-acetyltransferase epaC could catalyze the transfer of 2-methylsuccinyl-CoA, a common intermediate in the ethylmalonyl-CoA pathway, to generate the final product pestalamide A. The polypeptide is Dehydrogenase orf1 (Aspergillus niger (strain ATCC MYA-4892 / CBS 513.88 / FGSC A1513)).